We begin with the raw amino-acid sequence, 421 residues long: Outer capsid protein P8 (421 aa).

The protein belongs to the phytoreovirus outer capsid protein P8 family. As to quaternary structure, homotrimer. Homomultimer. Interacts with host peroxisomal glycolate oxidase (GOX). This interaction mediates its relocation to virus factories peripheral to host peroxisomes.

It localises to the virion. Its subcellular location is the host cytoplasm. In terms of biological role, capsid protein which self-assembles to form the outer icosahedral capsid with a T=13 symmetry, about 70 nm in diameter and consisting of 780 molecules capsid proteins. In Alopecurus aequalis (Barnyard grass), this protein is Outer capsid protein P8.